Reading from the N-terminus, the 99-residue chain is Putative regulatory protein Kole_1849 (99 aa).

Belongs to the RemA family.

The polypeptide is Putative regulatory protein Kole_1849 (Kosmotoga olearia (strain ATCC BAA-1733 / DSM 21960 / TBF 19.5.1)).